The following is a 431-amino-acid chain: Enolase (431 aa).

A (2R)-2-phosphoglycerate-binding site is contributed by Q163. E205 serves as the catalytic Proton donor. Mg(2+) contacts are provided by D242, E288, and D315. (2R)-2-phosphoglycerate-binding residues include K340, R369, S370, and K391. The Proton acceptor role is filled by K340.

This sequence belongs to the enolase family. Mg(2+) serves as cofactor.

The protein localises to the cytoplasm. Its subcellular location is the secreted. The protein resides in the cell surface. The catalysed reaction is (2R)-2-phosphoglycerate = phosphoenolpyruvate + H2O. The protein operates within carbohydrate degradation; glycolysis; pyruvate from D-glyceraldehyde 3-phosphate: step 4/5. Catalyzes the reversible conversion of 2-phosphoglycerate (2-PG) into phosphoenolpyruvate (PEP). It is essential for the degradation of carbohydrates via glycolysis. The chain is Enolase from Acholeplasma laidlawii (strain PG-8A).